The following is a 200-amino-acid chain: Lipid A acyltransferase PagP (200 aa).

The N-terminal stretch at 1–24 (MRLKLTSHTCLFALSSLLVTPAFA) is a signal peptide. Catalysis depends on residues histidine 72, aspartate 115, and serine 116.

This sequence belongs to the lipid A palmitoyltransferase family. Homodimer.

The protein resides in the cell outer membrane. The catalysed reaction is a lipid A + a 1,2-diacyl-sn-glycero-3-phosphocholine = a hepta-acyl lipid A + a 2-acyl-sn-glycero-3-phosphocholine. It catalyses the reaction a lipid IVA + a 1,2-diacyl-sn-glycero-3-phosphocholine = a lipid IVB + a 2-acyl-sn-glycero-3-phosphocholine. The enzyme catalyses a lipid IIA + a 1,2-diacyl-sn-glycero-3-phosphocholine = a lipid IIB + a 2-acyl-sn-glycero-3-phosphocholine. Transfers a fatty acid residue from the sn-1 position of a phospholipid to the N-linked hydroxyfatty acid chain on the proximal unit of lipid A or its precursors. The chain is Lipid A acyltransferase PagP from Dickeya dadantii (strain 3937) (Erwinia chrysanthemi (strain 3937)).